The chain runs to 295 residues: Bifunctional protein FolD (295 aa).

Residues 169 to 171 (GRG), T196, and V237 each bind NADP(+).

It belongs to the tetrahydrofolate dehydrogenase/cyclohydrolase family. Homodimer.

The enzyme catalyses (6R)-5,10-methylene-5,6,7,8-tetrahydrofolate + NADP(+) = (6R)-5,10-methenyltetrahydrofolate + NADPH. It carries out the reaction (6R)-5,10-methenyltetrahydrofolate + H2O = (6R)-10-formyltetrahydrofolate + H(+). Its pathway is one-carbon metabolism; tetrahydrofolate interconversion. In terms of biological role, catalyzes the oxidation of 5,10-methylenetetrahydrofolate to 5,10-methenyltetrahydrofolate and then the hydrolysis of 5,10-methenyltetrahydrofolate to 10-formyltetrahydrofolate. This is Bifunctional protein FolD from Kineococcus radiotolerans (strain ATCC BAA-149 / DSM 14245 / SRS30216).